The sequence spans 141 residues: HTH-type transcriptional repressor NsrR (141 aa).

Residues 2–129 (QLTSFTDYGL…DNYTLADLVE (128 aa)) form the HTH rrf2-type domain. Positions 28 to 51 (ISEVTDVYGVSRNHMVKIINQLSR) form a DNA-binding region, H-T-H motif. [2Fe-2S] cluster-binding residues include Cys91, Cys96, and Cys102.

[2Fe-2S] cluster serves as cofactor.

In terms of biological role, nitric oxide-sensitive repressor of genes involved in protecting the cell against nitrosative stress. May require iron for activity. The protein is HTH-type transcriptional repressor NsrR of Escherichia fergusonii (strain ATCC 35469 / DSM 13698 / CCUG 18766 / IAM 14443 / JCM 21226 / LMG 7866 / NBRC 102419 / NCTC 12128 / CDC 0568-73).